The following is a 284-amino-acid chain: MQNQKTVKIGNIDVANDKPFTLFAGMNVLESRDLAMQICEKYVEVTDRLGIPYVFKASFDKANRSSVHSYRGPGMEEGLKIFQELKDTFGVKIITDIHTEAQAQPVADVVDVIQLPAFLARQTDLVEAMAKTGAVINVKKPQFMSPDQVGNIIDKFSECGNENIILCERGSCMGYDNLVVDMLGFGVMKKASNGSPIIFDVTHSLQNRDPSGKASGGRRSQTVELAKAGLATGIAGLFIEAHPNPDKALCDGPSALPLDQLEPFLKQMKSLDDLIKGFEHIDIK.

It belongs to the KdsA family.

The protein localises to the cytoplasm. The enzyme catalyses D-arabinose 5-phosphate + phosphoenolpyruvate + H2O = 3-deoxy-alpha-D-manno-2-octulosonate-8-phosphate + phosphate. Its pathway is carbohydrate biosynthesis; 3-deoxy-D-manno-octulosonate biosynthesis; 3-deoxy-D-manno-octulosonate from D-ribulose 5-phosphate: step 2/3. It functions in the pathway bacterial outer membrane biogenesis; lipopolysaccharide biosynthesis. The sequence is that of 2-dehydro-3-deoxyphosphooctonate aldolase from Aliivibrio fischeri (strain ATCC 700601 / ES114) (Vibrio fischeri).